The chain runs to 387 residues: Methylthioribose-1-phosphate isomerase (387 aa).

Catalysis depends on Asp-257, which acts as the Proton donor.

It belongs to the eIF-2B alpha/beta/delta subunits family. MtnA subfamily.

It is found in the cytoplasm. The protein localises to the nucleus. It catalyses the reaction 5-(methylsulfanyl)-alpha-D-ribose 1-phosphate = 5-(methylsulfanyl)-D-ribulose 1-phosphate. It functions in the pathway amino-acid biosynthesis; L-methionine biosynthesis via salvage pathway; L-methionine from S-methyl-5-thio-alpha-D-ribose 1-phosphate: step 1/6. Its function is as follows. Catalyzes the interconversion of methylthioribose-1-phosphate (MTR-1-P) into methylthioribulose-1-phosphate (MTRu-1-P). This is Methylthioribose-1-phosphate isomerase (mri1) from Neosartorya fischeri (strain ATCC 1020 / DSM 3700 / CBS 544.65 / FGSC A1164 / JCM 1740 / NRRL 181 / WB 181) (Aspergillus fischerianus).